A 1149-amino-acid polypeptide reads, in one-letter code: Protogenin A (1149 aa).

A signal peptide spans 1–23; sequence MASFKRDLYLFLAVFLSISGVWS. Residues 24-932 lie on the Extracellular side of the membrane; it reads FSELFFIKEP…GFYHLDQRSM (909 aa). Ig-like domains are found at residues 27–117, 122–209, 222–309, and 314–399; these read LFFI…ARLT, STFT…ATLT, PRII…ANIT, and PSLV…RLIV. Disulfide bonds link Cys-48/Cys-100 and Cys-143/Cys-192. A glycan (N-linked (GlcNAc...) asparagine) is linked at Asn-78. N-linked (GlcNAc...) asparagine glycosylation is present at Asn-230. A disulfide bridge connects residues Cys-243 and Cys-291. N-linked (GlcNAc...) asparagine glycosylation is found at Asn-300 and Asn-307. Cys-335 and Cys-382 form a disulfide bridge. Fibronectin type-III domains follow at residues 408 to 502, 504 to 600, 605 to 704, 711 to 804, and 809 to 905; these read APRN…TLED, PLRA…TPKA, VPLA…VRDR, PPHH…TLPE, and APVG…IHTD. N-linked (GlcNAc...) asparagine glycans are attached at residues Asn-460 and Asn-475. A glycan (N-linked (GlcNAc...) asparagine) is linked at Asn-617. The interval 646-666 is disordered; it reads GQSEAAQAQIPPHHRQHTIGG. Residues Asn-720, Asn-741, and Asn-753 are each glycosylated (N-linked (GlcNAc...) asparagine). A helical membrane pass occupies residues 933-953; the sequence is AGIAVGVCIALTCIIICILIL. Topologically, residues 954-1149 are cytoplasmic; the sequence is ACRSKTRKSC…EQEMTDLHPV (196 aa). A disordered region spans residues 1060–1149; that stretch reads YTETSPENPP…EQEMTDLHPV (90 aa). Residues 1061–1073 are compositionally biased toward polar residues; that stretch reads TETSPENPPTTLQ. A compositionally biased stretch (basic and acidic residues) spans 1084–1106; it reads EGSHSSEGSHETSDSGRYSHDDT.

Belongs to the immunoglobulin superfamily. DCC family. Expression begins in the posterior region of the embryo and this posterior restriction persists at the 4 s stage. At early somite stages, expressed along the neural tube with lower levels in the lateral and paraxial mesoderm. Expression decreases caudally and rostrally becomes restricted to the ventral part of the brain. Widespread in the spinal cord at 30 hours post-fertilization (hpf) and is also expressed in the lens from this time. At 40 hpf, expression is restricted to the lens.

It is found in the membrane. Functionally, may play a role in anteroposterior axis elongation. This is Protogenin A from Danio rerio (Zebrafish).